We begin with the raw amino-acid sequence, 360 residues long: Phospho-N-acetylmuramoyl-pentapeptide-transferase (360 aa).

Helical transmembrane passes span 26 to 46 (AILA…KLIE), 74 to 94 (MGGL…GDLG), 97 to 117 (YVWV…IDDY), 132 to 152 (WKYI…FYST), 168 to 188 (ILPQ…VGAS), 199 to 219 (GLAI…AYLS), 236 to 256 (SGEL…FLWF), 263 to 283 (VFMG…IAVL), 288 to 308 (ILLV…ILQV), and 338 to 358 (VIVR…ATLK).

This sequence belongs to the glycosyltransferase 4 family. MraY subfamily. The cofactor is Mg(2+).

Its subcellular location is the cell inner membrane. The enzyme catalyses UDP-N-acetyl-alpha-D-muramoyl-L-alanyl-gamma-D-glutamyl-meso-2,6-diaminopimeloyl-D-alanyl-D-alanine + di-trans,octa-cis-undecaprenyl phosphate = di-trans,octa-cis-undecaprenyl diphospho-N-acetyl-alpha-D-muramoyl-L-alanyl-D-glutamyl-meso-2,6-diaminopimeloyl-D-alanyl-D-alanine + UMP. The protein operates within cell wall biogenesis; peptidoglycan biosynthesis. Functionally, catalyzes the initial step of the lipid cycle reactions in the biosynthesis of the cell wall peptidoglycan: transfers peptidoglycan precursor phospho-MurNAc-pentapeptide from UDP-MurNAc-pentapeptide onto the lipid carrier undecaprenyl phosphate, yielding undecaprenyl-pyrophosphoryl-MurNAc-pentapeptide, known as lipid I. The polypeptide is Phospho-N-acetylmuramoyl-pentapeptide-transferase (Shewanella amazonensis (strain ATCC BAA-1098 / SB2B)).